A 299-amino-acid chain; its full sequence is Lipoyl synthase 2 (299 aa).

Positions 43, 48, 54, 69, 73, 76, and 294 each coordinate [4Fe-4S] cluster. Residues 55–283 (YAAGTATFLL…GAVARDLGFA (229 aa)) enclose the Radical SAM core domain.

Belongs to the radical SAM superfamily. Lipoyl synthase family. The cofactor is [4Fe-4S] cluster.

It localises to the cytoplasm. The catalysed reaction is [[Fe-S] cluster scaffold protein carrying a second [4Fe-4S](2+) cluster] + N(6)-octanoyl-L-lysyl-[protein] + 2 oxidized [2Fe-2S]-[ferredoxin] + 2 S-adenosyl-L-methionine + 4 H(+) = [[Fe-S] cluster scaffold protein] + N(6)-[(R)-dihydrolipoyl]-L-lysyl-[protein] + 4 Fe(3+) + 2 hydrogen sulfide + 2 5'-deoxyadenosine + 2 L-methionine + 2 reduced [2Fe-2S]-[ferredoxin]. It participates in protein modification; protein lipoylation via endogenous pathway; protein N(6)-(lipoyl)lysine from octanoyl-[acyl-carrier-protein]: step 2/2. Its function is as follows. Catalyzes the radical-mediated insertion of two sulfur atoms into the C-6 and C-8 positions of the octanoyl moiety bound to the lipoyl domains of lipoate-dependent enzymes, thereby converting the octanoylated domains into lipoylated derivatives. This Parasynechococcus marenigrum (strain WH8102) protein is Lipoyl synthase 2.